Consider the following 443-residue polypeptide: Glucose-6-phosphate isomerase (443 aa).

The active-site Proton donor is Glu285. Residues His306 and Lys420 contribute to the active site.

The protein belongs to the GPI family.

It is found in the cytoplasm. The enzyme catalyses alpha-D-glucose 6-phosphate = beta-D-fructose 6-phosphate. It functions in the pathway carbohydrate biosynthesis; gluconeogenesis. It participates in carbohydrate degradation; glycolysis; D-glyceraldehyde 3-phosphate and glycerone phosphate from D-glucose: step 2/4. Catalyzes the reversible isomerization of glucose-6-phosphate to fructose-6-phosphate. In Staphylococcus aureus (strain USA300), this protein is Glucose-6-phosphate isomerase.